Here is a 203-residue protein sequence, read N- to C-terminus: GTP-binding protein yptV1 (203 aa).

Residues 15–23 (GDSGVGKSC), 33–40 (YTESYIST), 63–67 (DTAGQ), 121–124 (NKSD), and 151–153 (SAK) contribute to the GTP site. The Effector region signature appears at 37 to 45 (YISTIGVDF). The tract at residues 173 to 203 (MASQPVPPKPGGPVVRPTEGKPINNKSSSCC) is disordered. 2 S-geranylgeranyl cysteine lipidation sites follow: Cys202 and Cys203.

The protein belongs to the small GTPase superfamily. Rab family.

It localises to the cell membrane. Its function is as follows. Protein transport. Probably involved in vesicular traffic. This chain is GTP-binding protein yptV1 (YPTV1), found in Volvox carteri (Green alga).